We begin with the raw amino-acid sequence, 376 residues long: Thymidine kinase (376 aa).

The interval Met1–Glu39 is disordered. Over residues Ser19–Arg32 the composition is skewed to basic residues. Position 56 to 63 (Gly56 to Thr63) interacts with ATP. The Proton acceptor role is filled by Glu83. Residues Tyr101 and Gln125 each coordinate substrate. Arg216 is a binding site for ATP. Arg222 serves as a coordination point for substrate. Positions Gly260 to Pro280 are disordered.

The protein belongs to the herpesviridae thymidine kinase family. In terms of assembly, homodimer.

The enzyme catalyses thymidine + ATP = dTMP + ADP + H(+). Functionally, catalyzes the transfer of the gamma-phospho group of ATP to thymidine to generate dTMP in the salvage pathway of pyrimidine synthesis. The dTMP serves as a substrate for DNA polymerase during viral DNA replication. Allows the virus to be reactivated and to grow in non-proliferative cells lacking a high concentration of phosphorylated nucleic acid precursors. This chain is Thymidine kinase, found in Homo sapiens (Human).